The following is a 454-amino-acid chain: MSKKTRVPEVADDCTKTVYPDPIPMPTCPQLINDGTSCFLNIILQMLKRANFHDHFKGDWQKGKQKMLMHKELQQIFNGKPGPKDVSRLREMFSNEALKDGPHPLLVALKCLIKMSAVSDNDVIKEKGARDKMFQKQSDESNKMFAEHFIKTLLACKGMTKIRTMDIFRLIHICKKIFTVQKSMVEIDGPVRICGDLHGQYPDLIRLFAQGGFPPDSNYLFLGDYVDRGSFNLEVILLCLAYKARYPNNFMMLRGNHEVIHINEKYGFKDEVFNRKGEYHDELYPEFNEMMDMMPLVALVGGRILCMHGGLSQHIKSLDDLRNLRRPFHSEDECLENDIMWSDPAKVSGWTANPRGASVQFGENEVKEMCKLLDIDLIVRGHQVVQDGYEFFAGKKLVTVFSAPHYMQSFTNSAAVCKVSAGLEVSFEVLKPEDIRVEEIKCSAESSCASDMQQ.

Mn(2+) is bound by residues aspartate 196, histidine 198, aspartate 224, and asparagine 256. Catalysis depends on histidine 257, which acts as the Proton donor. Histidine 308 and histidine 382 together coordinate Mn(2+).

Belongs to the PPP phosphatase family. PP-1 subfamily. It depends on Mn(2+) as a cofactor.

The enzyme catalyses O-phospho-L-seryl-[protein] + H2O = L-seryl-[protein] + phosphate. It carries out the reaction O-phospho-L-threonyl-[protein] + H2O = L-threonyl-[protein] + phosphate. This chain is Serine/threonine-protein phosphatase C23G10.1, found in Caenorhabditis elegans.